The sequence spans 434 residues: Trigger factor (434 aa).

Residues 160-245 (DDKVKMNFIG…LTEVQAANLP (86 aa)) enclose the PPIase FKBP-type domain.

The protein belongs to the FKBP-type PPIase family. Tig subfamily.

It is found in the cytoplasm. It carries out the reaction [protein]-peptidylproline (omega=180) = [protein]-peptidylproline (omega=0). Its function is as follows. Involved in protein export. Acts as a chaperone by maintaining the newly synthesized protein in an open conformation. Functions as a peptidyl-prolyl cis-trans isomerase. The chain is Trigger factor from Shewanella frigidimarina (strain NCIMB 400).